We begin with the raw amino-acid sequence, 305 residues long: tRNA pseudouridine synthase B (305 aa).

Residue Asp-39 is the Nucleophile of the active site.

Belongs to the pseudouridine synthase TruB family. Type 1 subfamily.

The catalysed reaction is uridine(55) in tRNA = pseudouridine(55) in tRNA. Its function is as follows. Responsible for synthesis of pseudouridine from uracil-55 in the psi GC loop of transfer RNAs. The chain is tRNA pseudouridine synthase B from Staphylococcus epidermidis (strain ATCC 35984 / DSM 28319 / BCRC 17069 / CCUG 31568 / BM 3577 / RP62A).